An 874-amino-acid chain; its full sequence is Alanine--tRNA ligase (874 aa).

Residues H562, H566, C665, and H669 each coordinate Zn(2+).

This sequence belongs to the class-II aminoacyl-tRNA synthetase family. It depends on Zn(2+) as a cofactor.

The protein resides in the cytoplasm. The catalysed reaction is tRNA(Ala) + L-alanine + ATP = L-alanyl-tRNA(Ala) + AMP + diphosphate. Its function is as follows. Catalyzes the attachment of alanine to tRNA(Ala) in a two-step reaction: alanine is first activated by ATP to form Ala-AMP and then transferred to the acceptor end of tRNA(Ala). Also edits incorrectly charged Ser-tRNA(Ala) and Gly-tRNA(Ala) via its editing domain. This is Alanine--tRNA ligase from Pseudomonas putida (strain ATCC 700007 / DSM 6899 / JCM 31910 / BCRC 17059 / LMG 24140 / F1).